The chain runs to 879 residues: Beta-alanyl-bioamine nonribosomal peptide synthetase ebony (879 aa).

Residues 26-540 (FEEQQLRHAD…EHVPLLVNGK (515 aa)) form an adenylation region. One can recognise a Carrier domain in the interval 573–650 (EDLKLTARDL…EIIEKMAANH (78 aa)). Residue Ser-611 is modified to O-(pantetheine 4'-phosphoryl)serine. The condensation stretch occupies residues 666–679 (LKMEAVPLRLEHRQ). Glu-696 is a binding site for dopamine. Residue Glu-696 coordinates histamine. Thr-825 and Asn-827 together coordinate beta-alanine.

This sequence belongs to the NRP synthetase family. Pantetheine 4'-phosphate is required as a cofactor. The cofactor is Mg(2+). In terms of tissue distribution, expressed in the optic neuropils in the lamina and in distinct cells at the distal border of the medulla cortex (at protein level). Expressed in the protocerebrum and thoracic ganglia (at protein level). Expressed in antennal lobes, antennal nerves and subesophagic ganglion (at protein level). Specifically, expressed in epithelial glial cells of the medulla that surround the synaptic cleft of photoreceptor axonal endings (at protein level). Expressed in some cells in the cuticle.

The protein resides in the cytoplasm. The catalysed reaction is histamine + beta-alanine + ATP = carcinine + AMP + diphosphate + H(+). It carries out the reaction beta-alanine + ATP + H(+) = beta-alanyl-5'-AMP + diphosphate. The enzyme catalyses beta-alanyl-5'-AMP + holo-[peptidyl-carrier protein] = beta-alanyl-[peptidyl-carrier protein] + AMP + H(+). It catalyses the reaction beta-alanyl-[peptidyl-carrier protein] + histamine = carcinine + holo-[peptidyl-carrier protein] + H(+). The catalysed reaction is dopamine + beta-alanine + ATP = beta-alanyl-dopamine + AMP + diphosphate + H(+). It carries out the reaction beta-alanyl-[peptidyl-carrier protein] + dopamine = beta-alanyl-dopamine + holo-[peptidyl-carrier protein] + H(+). Nonribosomal peptide synthase which is required for the regulation of histamine and dopamine levels in various tissues through their condensation with beta-alanine. In epithelial glial cells, plays an essential role in the inactivation of histamine, the main neurotransmitter in the optical nerve system, by catalyzing the conversion of histamine into carcinine. In the cuticle, catalyzes the condensation of beta-alanine with dopamine to form beta-alanyl-dopamine (NBAD), a metabolite involved in the pigmentation and sclerotization of the insect cuticle. Also, regulates the cuticular hydrocarbon composition in females. Acts downstream of the body clock to regulate circadian behavioral rhythms. Can also condense beta-alanine with biogenic amines tyramine, octopamine, and serotonin in vitro. This chain is Beta-alanyl-bioamine nonribosomal peptide synthetase ebony, found in Drosophila melanogaster (Fruit fly).